The following is a 366-amino-acid chain: GTP cyclohydrolase 1 type 2 homolog (366 aa).

A divalent metal cation-binding residues include His-64, His-65, Asp-102, His-326, and Glu-329.

Belongs to the GTP cyclohydrolase I type 2/NIF3 family. As to quaternary structure, homohexamer.

This is GTP cyclohydrolase 1 type 2 homolog from Staphylococcus epidermidis (strain ATCC 12228 / FDA PCI 1200).